The following is a 388-amino-acid chain: Chorismate synthase (388 aa).

NADP(+) contacts are provided by arginine 39 and arginine 45. FMN is bound by residues 132-134 (RSS), 251-252 (NA), glycine 296, 311-315 (KPIPT), and arginine 337.

Belongs to the chorismate synthase family. In terms of assembly, homotetramer. FMNH2 serves as cofactor.

The catalysed reaction is 5-O-(1-carboxyvinyl)-3-phosphoshikimate = chorismate + phosphate. It functions in the pathway metabolic intermediate biosynthesis; chorismate biosynthesis; chorismate from D-erythrose 4-phosphate and phosphoenolpyruvate: step 7/7. Catalyzes the anti-1,4-elimination of the C-3 phosphate and the C-6 proR hydrogen from 5-enolpyruvylshikimate-3-phosphate (EPSP) to yield chorismate, which is the branch point compound that serves as the starting substrate for the three terminal pathways of aromatic amino acid biosynthesis. This reaction introduces a second double bond into the aromatic ring system. The chain is Chorismate synthase from Staphylococcus aureus (strain MW2).